The primary structure comprises 204 residues: Urease accessory protein UreG (204 aa).

A GTP-binding site is contributed by 12–19 (GPVGSGKT).

The protein belongs to the SIMIBI class G3E GTPase family. UreG subfamily. In terms of assembly, homodimer. UreD, UreF and UreG form a complex that acts as a GTP-hydrolysis-dependent molecular chaperone, activating the urease apoprotein by helping to assemble the nickel containing metallocenter of UreC. The UreE protein probably delivers the nickel.

It localises to the cytoplasm. Facilitates the functional incorporation of the urease nickel metallocenter. This process requires GTP hydrolysis, probably effectuated by UreG. This is Urease accessory protein UreG from Azotobacter vinelandii (strain DJ / ATCC BAA-1303).